Here is a 768-residue protein sequence, read N- to C-terminus: Probable beta-glucosidase M (768 aa).

An N-terminal signal peptide occupies residues 1–19 (MHAIAGLTGLLAGVSLSYA). 3 N-linked (GlcNAc...) asparagine glycosylation sites follow: asparagine 25, asparagine 72, and asparagine 259. Aspartate 287 is a catalytic residue. N-linked (GlcNAc...) asparagine glycosylation is found at asparagine 315, asparagine 322, asparagine 394, asparagine 434, asparagine 472, asparagine 543, and asparagine 651.

Belongs to the glycosyl hydrolase 3 family.

The protein resides in the secreted. The enzyme catalyses Hydrolysis of terminal, non-reducing beta-D-glucosyl residues with release of beta-D-glucose.. It functions in the pathway glycan metabolism; cellulose degradation. In terms of biological role, beta-glucosidases are one of a number of cellulolytic enzymes involved in the degradation of cellulosic biomass. Catalyzes the last step releasing glucose from the inhibitory cellobiose. In Aspergillus oryzae (strain ATCC 42149 / RIB 40) (Yellow koji mold), this protein is Probable beta-glucosidase M (bglM).